We begin with the raw amino-acid sequence, 208 residues long: Small ribosomal subunit protein uS4 (208 aa).

Positions 98–158 (RRLDNIAYRL…EKSRKVACIN (61 aa)) constitute an S4 RNA-binding domain.

Belongs to the universal ribosomal protein uS4 family. As to quaternary structure, part of the 30S ribosomal subunit. Contacts protein S5. The interaction surface between S4 and S5 is involved in control of translational fidelity.

Its function is as follows. One of the primary rRNA binding proteins, it binds directly to 16S rRNA where it nucleates assembly of the body of the 30S subunit. Functionally, with S5 and S12 plays an important role in translational accuracy. The protein is Small ribosomal subunit protein uS4 of Geotalea uraniireducens (strain Rf4) (Geobacter uraniireducens).